Consider the following 490-residue polypeptide: MLPNTGKLAGCTVFITGASRGIGKAIALKAAKDGANIVIAAKTTQKHPKLLGTIYTAAEEIEAAGGTALPCVVDVRDEQQINSAVEKAVEKFGGIDILVNNASAISLTNTLDTPTKRVDLMMNVNTRGTYLTSKACIPFLKKSKVGHILNLSPPLNLNPLWFKQHCAYTIAKYGMSMCVLGMAEEFRGEIAVNALWPRTAIHTAAMDMLGGSGVENQCRKVDIIADAAYSIFKRPKSFTGNFIIDENILKEEGIKNFDVYAIAPGHPLLPDFFLDEHPDAVMEEKESNDSVPEVKEEKLQLQEESQLQKQPQLQEQPQLQEKPQLQEKPQLQEQPQLQEKPQLQEQPQQREQPQLQQQPRPRQQPQPFVQSMLPQKPHFGAVEETFRIVKDSLSDEVVRATQAVYQFELSGEDGGTWFLDLKSKGGKVGHGEPSDRADVVMSMATDDFVKMFSGKLKPTMAFMSGKLKIKGNIALAIKLEKLMTQMNSRL.

NADP(+) is bound by residues 17 to 23 (GASRGIG), lysine 42, and aspartate 74. N6-(2-hydroxyisobutyryl)lysine is present on lysine 42. At lysine 116 the chain carries N6-acetyllysine. The Proton acceptor role is filled by tyrosine 168. Residue lysine 172 participates in NADP(+) binding. Positions 282-301 (MEEKESNDSVPEVKEEKLQL) are enriched in basic and acidic residues. The interval 282–370 (MEEKESNDSV…PRQQPQPFVQ (89 aa)) is disordered. Residues 302–367 (QEESQLQKQP…QPRPRQQPQP (66 aa)) show a composition bias toward low complexity. The 108-residue stretch at 380–487 (GAVEETFRIV…KLEKLMTQMN (108 aa)) folds into the SCP2 domain. Lysine 390 carries the post-translational modification N6-succinyllysine.

Belongs to the short-chain dehydrogenases/reductases (SDR) family. As to expression, widely expressed.

Its subcellular location is the peroxisome. The protein resides in the mitochondrion. Has apparently no steroid dehydrogenase activity. Controls bile acid (BA) and lipid metabolism in response to nutritional cues. In Mus musculus (Mouse), this protein is Hydroxysteroid dehydrogenase-like protein 2 (Hsdl2).